A 293-amino-acid chain; its full sequence is Phosphatidylserine decarboxylase proenzyme (293 aa).

Residues Asp-88, His-144, and Ser-247 each act as charge relay system; for autoendoproteolytic cleavage activity in the active site. The Schiff-base intermediate with substrate; via pyruvic acid; for decarboxylase activity role is filled by Ser-247. A Pyruvic acid (Ser); by autocatalysis modification is found at Ser-247.

This sequence belongs to the phosphatidylserine decarboxylase family. PSD-B subfamily. Prokaryotic type I sub-subfamily. Heterodimer of a large membrane-associated beta subunit and a small pyruvoyl-containing alpha subunit. Requires pyruvate as cofactor. Post-translationally, is synthesized initially as an inactive proenzyme. Formation of the active enzyme involves a self-maturation process in which the active site pyruvoyl group is generated from an internal serine residue via an autocatalytic post-translational modification. Two non-identical subunits are generated from the proenzyme in this reaction, and the pyruvate is formed at the N-terminus of the alpha chain, which is derived from the carboxyl end of the proenzyme. The autoendoproteolytic cleavage occurs by a canonical serine protease mechanism, in which the side chain hydroxyl group of the serine supplies its oxygen atom to form the C-terminus of the beta chain, while the remainder of the serine residue undergoes an oxidative deamination to produce ammonia and the pyruvoyl prosthetic group on the alpha chain. During this reaction, the Ser that is part of the protease active site of the proenzyme becomes the pyruvoyl prosthetic group, which constitutes an essential element of the active site of the mature decarboxylase.

The protein localises to the cell membrane. It catalyses the reaction a 1,2-diacyl-sn-glycero-3-phospho-L-serine + H(+) = a 1,2-diacyl-sn-glycero-3-phosphoethanolamine + CO2. Its pathway is phospholipid metabolism; phosphatidylethanolamine biosynthesis; phosphatidylethanolamine from CDP-diacylglycerol: step 2/2. Functionally, catalyzes the formation of phosphatidylethanolamine (PtdEtn) from phosphatidylserine (PtdSer). This is Phosphatidylserine decarboxylase proenzyme from Xylella fastidiosa (strain 9a5c).